A 275-amino-acid chain; its full sequence is Transmembrane protein 202 (275 aa).

4 consecutive transmembrane segments (helical) span residues 60–80 (SGFSVLLLACTSPLNLVQFLV), 116–136 (ALFLISILFMLISLGLLLSSC), 151–171 (VSMLSFCSAVSLLLCLNLFLA), and 193–213 (WCSEVLYICVGIISFLNFITF).

It localises to the membrane. In Mus musculus (Mouse), this protein is Transmembrane protein 202 (Tmem202).